A 214-amino-acid polypeptide reads, in one-letter code: Thymidylate kinase (214 aa).

7-14 (GIDGAGKS) provides a ligand contact to ATP.

This sequence belongs to the thymidylate kinase family.

It carries out the reaction dTMP + ATP = dTDP + ADP. Phosphorylation of dTMP to form dTDP in both de novo and salvage pathways of dTTP synthesis. The polypeptide is Thymidylate kinase (Chlorobium luteolum (strain DSM 273 / BCRC 81028 / 2530) (Pelodictyon luteolum)).